The following is a 424-amino-acid chain: Translation initiation factor 2 subunit gamma (424 aa).

The 198-residue stretch at 23–220 folds into the tr-type G domain; sequence LPEVNIGLVG…AIEETIPTPE (198 aa). A G1 region spans residues 32 to 39; sequence GHVDHGKT. Mg(2+) contacts are provided by aspartate 35, threonine 39, glycine 60, and serine 62. 35 to 40 provides a ligand contact to GTP; sequence DHGKTT. The tract at residues 60-64 is G2; it reads GISIK. Residues 107–110 form a G3 region; the sequence is DSPG. Residues 163 to 166 and 198 to 200 each bind GTP; these read NKID and SAQ. The tract at residues 163–166 is G4; it reads NKID. Positions 198–200 are G5; sequence SAQ.

This sequence belongs to the TRAFAC class translation factor GTPase superfamily. Classic translation factor GTPase family. EIF2G subfamily. As to quaternary structure, heterotrimer composed of an alpha, a beta and a gamma chain. Requires Mg(2+) as cofactor.

The enzyme catalyses GTP + H2O = GDP + phosphate + H(+). EIF-2 functions in the early steps of protein synthesis by forming a ternary complex with GTP and initiator tRNA. The sequence is that of Translation initiation factor 2 subunit gamma from Archaeoglobus fulgidus (strain ATCC 49558 / DSM 4304 / JCM 9628 / NBRC 100126 / VC-16).